The following is a 215-amino-acid chain: Pyrrolidone-carboxylate peptidase (215 aa).

Residues Glu-80, Cys-143, and His-167 contribute to the active site.

This sequence belongs to the peptidase C15 family. In terms of assembly, homotetramer.

It is found in the cytoplasm. It carries out the reaction Release of an N-terminal pyroglutamyl group from a polypeptide, the second amino acid generally not being Pro.. Its function is as follows. Removes 5-oxoproline from various penultimate amino acid residues except L-proline. The polypeptide is Pyrrolidone-carboxylate peptidase (Bacillus cereus (strain B4264)).